Here is a 301-residue protein sequence, read N- to C-terminus: Thymidylate synthase (301 aa).

DUMP-binding positions include R38 and R163 to R164. Catalysis depends on C183, which acts as the Nucleophile. DUMP-binding positions include R203 to D206, N214, and H244 to Y246. Residue D206 participates in (6R)-5,10-methylene-5,6,7,8-tetrahydrofolate binding. Residue A300 participates in (6R)-5,10-methylene-5,6,7,8-tetrahydrofolate binding.

It belongs to the thymidylate synthase family. As to quaternary structure, homodimer.

It catalyses the reaction dUMP + (6R)-5,10-methylene-5,6,7,8-tetrahydrofolate = 7,8-dihydrofolate + dTMP. It functions in the pathway pyrimidine metabolism; dTTP biosynthesis. Catalyzes the reductive methylation of deoxyuridylate to thymidylate. In Varicella-zoster virus (strain Dumas) (HHV-3), this protein is Thymidylate synthase.